Consider the following 164-residue polypeptide: MEMTNAQRLILSNQYKMMTMLDPANAERYRRLQTIIERGYGLQMRELDREFGELKEETCRTIIDIMEMYHALHVSWSNLQDQQSIDERRVTFLGFDAATEARYLGYVRFMVNVEGRYTHFDAGTHGFYAQTPMWEKYQRMLNVWHACPRQYHLSANEINQIINA.

This sequence belongs to the UPF0304 family.

This is UPF0304 protein YfbU from Shigella flexneri serotype 5b (strain 8401).